The primary structure comprises 199 residues: Cytochrome c-type cyt cy (199 aa).

A helical transmembrane segment spans residues 7-27 (ITKIGVTLFAVALFYGFIYML). Over residues 69 to 80 (AAETAEAAAPAE) the composition is skewed to low complexity. The disordered stretch occupies residues 69-93 (AAETAEAAAPAEPAAPPPPAYVEVD). Cys-112, Cys-115, His-116, and Met-148 together coordinate heme c.

Binds 1 heme c group covalently per subunit.

The protein localises to the cell membrane. In terms of biological role, electron transfer pathways that operates during photosynthesis. This is Cytochrome c-type cyt cy (cycY) from Rhodobacter capsulatus (strain ATCC BAA-309 / NBRC 16581 / SB1003).